Consider the following 92-residue polypeptide: Small ribosomal subunit protein uS19c (92 aa).

It belongs to the universal ribosomal protein uS19 family.

The protein resides in the plastid. It is found in the chloroplast. Its function is as follows. Protein S19 forms a complex with S13 that binds strongly to the 16S ribosomal RNA. This chain is Small ribosomal subunit protein uS19c, found in Phaseolus angularis (Azuki bean).